The following is a 245-amino-acid chain: Biosynthetic peptidoglycan transglycosylase (245 aa).

Residues 20–42 traverse the membrane as a helical segment; sequence VYAGSVFAGAWLATQLFYLVQIA.

The protein belongs to the glycosyltransferase 51 family.

Its subcellular location is the cell inner membrane. It catalyses the reaction [GlcNAc-(1-&gt;4)-Mur2Ac(oyl-L-Ala-gamma-D-Glu-L-Lys-D-Ala-D-Ala)](n)-di-trans,octa-cis-undecaprenyl diphosphate + beta-D-GlcNAc-(1-&gt;4)-Mur2Ac(oyl-L-Ala-gamma-D-Glu-L-Lys-D-Ala-D-Ala)-di-trans,octa-cis-undecaprenyl diphosphate = [GlcNAc-(1-&gt;4)-Mur2Ac(oyl-L-Ala-gamma-D-Glu-L-Lys-D-Ala-D-Ala)](n+1)-di-trans,octa-cis-undecaprenyl diphosphate + di-trans,octa-cis-undecaprenyl diphosphate + H(+). It participates in cell wall biogenesis; peptidoglycan biosynthesis. Functionally, peptidoglycan polymerase that catalyzes glycan chain elongation from lipid-linked precursors. In Burkholderia ambifaria (strain ATCC BAA-244 / DSM 16087 / CCUG 44356 / LMG 19182 / AMMD) (Burkholderia cepacia (strain AMMD)), this protein is Biosynthetic peptidoglycan transglycosylase.